We begin with the raw amino-acid sequence, 221 residues long: Ribonuclease 3 (221 aa).

Residues 1-123 (MERTGHAFAD…LIAVLYLDGG (123 aa)) enclose the RNase III domain. Glutamate 36 is a binding site for Mg(2+). Residue aspartate 40 is part of the active site. Positions 109 and 112 each coordinate Mg(2+). Residue glutamate 112 is part of the active site. Positions 148–217 (DAKTELQEWA…AAALLLREGV (70 aa)) constitute a DRBM domain.

This sequence belongs to the ribonuclease III family. As to quaternary structure, homodimer. It depends on Mg(2+) as a cofactor.

The protein localises to the cytoplasm. The enzyme catalyses Endonucleolytic cleavage to 5'-phosphomonoester.. In terms of biological role, digests double-stranded RNA. Involved in the processing of primary rRNA transcript to yield the immediate precursors to the large and small rRNAs (23S and 16S). Processes some mRNAs, and tRNAs when they are encoded in the rRNA operon. Processes pre-crRNA and tracrRNA of type II CRISPR loci if present in the organism. The sequence is that of Ribonuclease 3 from Mesorhizobium japonicum (strain LMG 29417 / CECT 9101 / MAFF 303099) (Mesorhizobium loti (strain MAFF 303099)).